Here is a 371-residue protein sequence, read N- to C-terminus: 4-hydroxy-3-methylbut-2-en-1-yl diphosphate synthase (flavodoxin) (371 aa).

The [4Fe-4S] cluster site is built by Cys-269, Cys-272, Cys-304, and Glu-311.

Belongs to the IspG family. [4Fe-4S] cluster serves as cofactor.

The enzyme catalyses (2E)-4-hydroxy-3-methylbut-2-enyl diphosphate + oxidized [flavodoxin] + H2O + 2 H(+) = 2-C-methyl-D-erythritol 2,4-cyclic diphosphate + reduced [flavodoxin]. It functions in the pathway isoprenoid biosynthesis; isopentenyl diphosphate biosynthesis via DXP pathway; isopentenyl diphosphate from 1-deoxy-D-xylulose 5-phosphate: step 5/6. In terms of biological role, converts 2C-methyl-D-erythritol 2,4-cyclodiphosphate (ME-2,4cPP) into 1-hydroxy-2-methyl-2-(E)-butenyl 4-diphosphate. The chain is 4-hydroxy-3-methylbut-2-en-1-yl diphosphate synthase (flavodoxin) from Acinetobacter baumannii (strain AB307-0294).